The sequence spans 245 residues: Probable transcriptional regulatory protein BF2589 (245 aa).

Residues 225–245 (EDEDVQNVYTNMKPADNEGEE) are disordered.

The protein belongs to the TACO1 family.

The protein localises to the cytoplasm. This is Probable transcriptional regulatory protein BF2589 from Bacteroides fragilis (strain ATCC 25285 / DSM 2151 / CCUG 4856 / JCM 11019 / LMG 10263 / NCTC 9343 / Onslow / VPI 2553 / EN-2).